Here is a 121-residue protein sequence, read N- to C-terminus: Fluoride-specific ion channel FluC 3 (121 aa).

4 helical membrane-spanning segments follow: residues 3–23 (VFLP…RYLL), 40–60 (FTIN…ALGG), 69–89 (VLAT…NEMV), and 101–121 (AAYL…GFLV). 2 residues coordinate Na(+): Gly76 and Ser79.

Belongs to the fluoride channel Fluc/FEX (TC 1.A.43) family.

The protein localises to the cell membrane. It catalyses the reaction fluoride(in) = fluoride(out). Na(+) is not transported, but it plays an essential structural role and its presence is essential for fluoride channel function. Its function is as follows. Fluoride-specific ion channel. Important for reducing fluoride concentration in the cell, thus reducing its toxicity. The protein is Fluoride-specific ion channel FluC 3 of Bifidobacterium longum (strain NCC 2705).